A 688-amino-acid chain; its full sequence is GTPase IMAP family member 8 (688 aa).

Residues 22–44 are disordered; the sequence is TSIGQGERPRASRGQESNFKQSQ. Over residues 35 to 44 the composition is skewed to polar residues; that stretch reads GQESNFKQSQ. AIG1-type G domains lie at 46 to 246, 281 to 471, and 472 to 681; these read TSTL…TENS, TPEL…VIRE, and KELL…SAVG. Residues 55 to 62 are G1; the sequence is GKQGAGKS. GTP contacts are provided by residues 55–63 and Ser-76; that span reads GKQGAGKSA. A G2 region spans residues 82–86; the sequence is MVTKR. A G3 region spans residues 103-106; that stretch reads DTPD. The tract at residues 171-174 is G4; sequence TRED. Residues 172-174 and Asn-208 each bind GTP; that span reads RED. A G5 region spans residues 207 to 209; it reads NNK.

This sequence belongs to the TRAFAC class TrmE-Era-EngA-EngB-Septin-like GTPase superfamily. AIG1/Toc34/Toc159-like paraseptin GTPase family. IAN subfamily. As to expression, spleen, thymus and T-cells. Greatly reduced in T-cells from lymphopenic rats.

It is found in the endoplasmic reticulum. Its subcellular location is the golgi apparatus. The protein localises to the mitochondrion. It localises to the cytoplasm. The protein resides in the cytosol. Its function is as follows. Exerts an anti-apoptotic effect in the immune system and is involved in responses to infections. The polypeptide is GTPase IMAP family member 8 (Gimap8) (Rattus norvegicus (Rat)).